The primary structure comprises 435 residues: Trigger factor (435 aa).

Residues Gly163 to Pro248 form the PPIase FKBP-type domain.

Belongs to the FKBP-type PPIase family. Tig subfamily.

The protein localises to the cytoplasm. It catalyses the reaction [protein]-peptidylproline (omega=180) = [protein]-peptidylproline (omega=0). Functionally, involved in protein export. Acts as a chaperone by maintaining the newly synthesized protein in an open conformation. Functions as a peptidyl-prolyl cis-trans isomerase. The sequence is that of Trigger factor from Maridesulfovibrio salexigens (strain ATCC 14822 / DSM 2638 / NCIMB 8403 / VKM B-1763) (Desulfovibrio salexigens).